Reading from the N-terminus, the 500-residue chain is FAD-linked oxidoreductase chyH (500 aa).

A signal peptide spans Met1–Ser20. In terms of domain architecture, FAD-binding PCMH-type spans Leu65–Ile235. N-linked (GlcNAc...) asparagine glycosylation is found at Asn199, Asn266, Asn275, and Asn383.

The protein belongs to the oxygen-dependent FAD-linked oxidoreductase family. It depends on FAD as a cofactor.

The protein operates within pigment biosynthesis. Its function is as follows. FAD-linked oxidoreductase; part of the gene cluster that mediates the biosynthesis of the yellow pigment chrysogine. the NRPS chyA mediates the condensation of anthranilic acid and alanine into the intermediate 2-(2-aminopropanamido)benzoic acid. The remainder of the pathway is highly branched yielding at least 13 chrysogine-related compounds. The malonyl transferase chyE converts 2-(2-aminopropanamido)benzoic acid and 2-(2-aminopropanamido)benzamidine into 2-(2-(2-carboxyacetamido)propanamido)benzoic acid and 3-((1-((2-carbamoylphenyl)amino)-1-oxopropan-2-yl)amino)-3-oxopropanoic acid, respectively. ChyD is an amidase, being responsible for the amidation of the carboxylic acid moiety of 2-(2-aminopropanamido)benzoic acid, 2-(2-(2-carboxyacetamido)propanamido)benzoic acid and 2-(2-((4-amino-1-carboxy-4-oxobutyl)amino)propanamido)benzoic acid. ChyC is involved in the same reactions as ChyD, but plays a more minor role in the amidation reactions compared to chyD. The oxidoreductases chyH and chyM are involved in oxidation reactions that form N-pyruvoylanthranilamide from 2-(2-aminopropanamido)benzamidine and (1-((2-carbamoylphenyl)amino)-1-oxopropan-2-yl)glutamine, respectively. N-pyruvoylanthranilamide is further converted via two further branches in the pathway, yielding chrysogine and additional chrysogine-related coumpounds. Chrysogine is likely formed by a spontaneous ring closure from N-pyruvoylanthranilamide. The chain is FAD-linked oxidoreductase chyH from Penicillium rubens (strain ATCC 28089 / DSM 1075 / NRRL 1951 / Wisconsin 54-1255) (Penicillium chrysogenum).